A 236-amino-acid chain; its full sequence is Sugar fermentation stimulation protein homolog (236 aa).

Belongs to the SfsA family.

This is Sugar fermentation stimulation protein homolog from Synechococcus elongatus (strain ATCC 33912 / PCC 7942 / FACHB-805) (Anacystis nidulans R2).